The following is an 87-amino-acid chain: Kappa-bungarotoxin (87 aa).

Positions 1-21 (MKTLLLTLVVVTIVCLDLGYT) are cleaved as a signal peptide. Cystine bridges form between Cys24/Cys42, Cys35/Cys63, Cys48/Cys52, Cys67/Cys79, and Cys80/Cys85.

This sequence belongs to the three-finger toxin family. Long-chain subfamily. Kappa-neurotoxin sub-subfamily. In terms of assembly, homodimer and heterodimer; non-covalently linked. In terms of tissue distribution, expressed by the venom gland.

It localises to the secreted. In terms of biological role, postsynaptic neurotoxin that binds and inhibits neuronal nicotinic acetylcholine receptors (nAChR) with high affinity (IC(50)&lt;100 nM). Is a selective, and slowly reversible antagonist of alpha-3/CHRNA3-containing and some alpha-4/CHRNA4-containing AChRs. The chain is Kappa-bungarotoxin from Bungarus multicinctus (Many-banded krait).